Consider the following 348-residue polypeptide: Major outer membrane protein P.IB (348 aa).

An N-terminal signal peptide occupies residues 1-19 (MKKSLIALTLAALPVAATA).

It belongs to the Gram-negative porin family. Homotrimer.

Its subcellular location is the cell outer membrane. Functionally, serves as a slightly cation selective porin. Major antigen on the gonococcal cell surface and it may have pathogenic properties in addition to its porin activity. The chain is Major outer membrane protein P.IB (porB) from Neisseria gonorrhoeae.